An 89-amino-acid polypeptide reads, in one-letter code: Small ribosomal subunit protein bS18 (89 aa).

This sequence belongs to the bacterial ribosomal protein bS18 family. Part of the 30S ribosomal subunit. Forms a tight heterodimer with protein bS6.

Its function is as follows. Binds as a heterodimer with protein bS6 to the central domain of the 16S rRNA, where it helps stabilize the platform of the 30S subunit. This Bdellovibrio bacteriovorus (strain ATCC 15356 / DSM 50701 / NCIMB 9529 / HD100) protein is Small ribosomal subunit protein bS18.